We begin with the raw amino-acid sequence, 204 residues long: Tumor necrosis factor receptor superfamily member 26 (204 aa).

The signal sequence occupies residues 1 to 19 (MTRLRLLLLLGLLLRVAVC). Over 20–164 (SVNTITLCKI…SQCFCFSKPL (145 aa)) the chain is Extracellular. 9 disulfide bridges follow: cysteine 27-cysteine 38, cysteine 39-cysteine 52, cysteine 42-cysteine 61, cysteine 64-cysteine 79, cysteine 82-cysteine 95, cysteine 85-cysteine 103, cysteine 105-cysteine 120, cysteine 123-cysteine 135, and cysteine 126-cysteine 143. 3 TNFR-Cys repeats span residues 27–61 (CKIGEFKHENLCCLQCSAGTYLRNPCQENHNKSEC), 63–103 (PCDS…DRVC), and 104–143 (QCKQGTYCDSENCLERCHTCSSCPDGRVVRKCNATMDTVC). Asparagine 57 carries an N-linked (GlcNAc...) asparagine glycan. Residue asparagine 136 is glycosylated (N-linked (GlcNAc...) asparagine). Residues 165–185 (GIVVIIAAFIIIIGAVIILIL) form a helical membrane-spanning segment. At 186–204 (KIICYCKRGENIQLSSTML) the chain is on the cytoplasmic side.

As to expression, expressed in thymus and spleen. Detectable levels in lung.

The protein resides in the membrane. The chain is Tumor necrosis factor receptor superfamily member 26 (Tnfrsf26) from Mus musculus (Mouse).